Here is a 98-residue protein sequence, read N- to C-terminus: Integration host factor subunit alpha (98 aa).

Basic and acidic residues predominate over residues 53-69 (DLREKSERPGRNPKTGE). The interval 53–73 (DLREKSERPGRNPKTGEDIPI) is disordered.

The protein belongs to the bacterial histone-like protein family. As to quaternary structure, heterodimer of an alpha and a beta chain.

This protein is one of the two subunits of integration host factor, a specific DNA-binding protein that functions in genetic recombination as well as in transcriptional and translational control. This chain is Integration host factor subunit alpha, found in Aliivibrio fischeri (strain ATCC 700601 / ES114) (Vibrio fischeri).